We begin with the raw amino-acid sequence, 437 residues long: Adenosylmethionine-8-amino-7-oxononanoate aminotransferase (437 aa).

Trp-64 is a substrate binding site. 124–125 is a pyridoxal 5'-phosphate binding site; it reads GS. Tyr-157 serves as a coordination point for substrate. Asp-254 contributes to the pyridoxal 5'-phosphate binding site. Substrate is bound by residues Lys-283 and Gly-316. Lys-283 is modified (N6-(pyridoxal phosphate)lysine). 317–318 provides a ligand contact to pyridoxal 5'-phosphate; sequence PT. A substrate-binding site is contributed by Arg-400.

Belongs to the class-III pyridoxal-phosphate-dependent aminotransferase family. BioA subfamily. Homodimer. Pyridoxal 5'-phosphate is required as a cofactor.

The protein resides in the cytoplasm. The catalysed reaction is (8S)-8-amino-7-oxononanoate + S-adenosyl-L-methionine = S-adenosyl-4-methylsulfanyl-2-oxobutanoate + (7R,8S)-7,8-diammoniononanoate. It participates in cofactor biosynthesis; biotin biosynthesis; 7,8-diaminononanoate from 8-amino-7-oxononanoate (SAM route): step 1/1. Functionally, catalyzes the transfer of the alpha-amino group from S-adenosyl-L-methionine (SAM) to 7-keto-8-aminopelargonic acid (KAPA) to form 7,8-diaminopelargonic acid (DAPA). It is the only aminotransferase known to utilize SAM as an amino donor. This chain is Adenosylmethionine-8-amino-7-oxononanoate aminotransferase (bioA), found in Mycobacterium tuberculosis (strain CDC 1551 / Oshkosh).